We begin with the raw amino-acid sequence, 153 residues long: Ribosomal RNA large subunit methyltransferase H (153 aa).

S-adenosyl-L-methionine-binding positions include L75, G102, and 121–126; that span reads LSKLTL.

Belongs to the RNA methyltransferase RlmH family. In terms of assembly, homodimer.

The protein resides in the cytoplasm. The enzyme catalyses pseudouridine(1915) in 23S rRNA + S-adenosyl-L-methionine = N(3)-methylpseudouridine(1915) in 23S rRNA + S-adenosyl-L-homocysteine + H(+). Its function is as follows. Specifically methylates the pseudouridine at position 1915 (m3Psi1915) in 23S rRNA. This is Ribosomal RNA large subunit methyltransferase H from Campylobacter jejuni (strain RM1221).